Consider the following 279-residue polypeptide: Bifunctional protein FolD (279 aa).

Residues 165–167 (GRS), serine 190, and isoleucine 231 each bind NADP(+).

This sequence belongs to the tetrahydrofolate dehydrogenase/cyclohydrolase family. As to quaternary structure, homodimer.

It carries out the reaction (6R)-5,10-methylene-5,6,7,8-tetrahydrofolate + NADP(+) = (6R)-5,10-methenyltetrahydrofolate + NADPH. The enzyme catalyses (6R)-5,10-methenyltetrahydrofolate + H2O = (6R)-10-formyltetrahydrofolate + H(+). Its pathway is one-carbon metabolism; tetrahydrofolate interconversion. Functionally, catalyzes the oxidation of 5,10-methylenetetrahydrofolate to 5,10-methenyltetrahydrofolate and then the hydrolysis of 5,10-methenyltetrahydrofolate to 10-formyltetrahydrofolate. In Halalkalibacterium halodurans (strain ATCC BAA-125 / DSM 18197 / FERM 7344 / JCM 9153 / C-125) (Bacillus halodurans), this protein is Bifunctional protein FolD.